Here is a 226-residue protein sequence, read N- to C-terminus: MADEKNKPENPDLDQRDINNPRDREALKQAADDFLKARRAEAAADEAEGEVDETANRIAVLEADNTELKDQMLRVAAEMENLRKRTQRDVQDARAYAITNFARDMLSVSDNLRRALDAIPADALEADSNLKSLSEGVEMTERAMLLALERHGVKKLEPEGQKFDPNFHQAMFEVPNPDLPNNTVVQVVQAGYAIGDRVLRPAMVGVSKGGPKVSAENGASTSEDNA.

Disordered stretches follow at residues 1–24 and 205–226; these read MADEKNKPENPDLDQRDINNPRDR and GVSKGGPKVSAENGASTSEDNA. The span at 217 to 226 shows a compositional bias: polar residues; that stretch reads NGASTSEDNA.

This sequence belongs to the GrpE family. As to quaternary structure, homodimer.

The protein localises to the cytoplasm. Its function is as follows. Participates actively in the response to hyperosmotic and heat shock by preventing the aggregation of stress-denatured proteins, in association with DnaK and GrpE. It is the nucleotide exchange factor for DnaK and may function as a thermosensor. Unfolded proteins bind initially to DnaJ; upon interaction with the DnaJ-bound protein, DnaK hydrolyzes its bound ATP, resulting in the formation of a stable complex. GrpE releases ADP from DnaK; ATP binding to DnaK triggers the release of the substrate protein, thus completing the reaction cycle. Several rounds of ATP-dependent interactions between DnaJ, DnaK and GrpE are required for fully efficient folding. The sequence is that of Protein GrpE from Brucella melitensis biotype 1 (strain ATCC 23456 / CCUG 17765 / NCTC 10094 / 16M).